A 235-amino-acid polypeptide reads, in one-letter code: Pyridoxine 5'-phosphate synthase (235 aa).

Asparagine 6 lines the 3-amino-2-oxopropyl phosphate pocket. Position 8-9 (8-9 (DH)) interacts with 1-deoxy-D-xylulose 5-phosphate. Arginine 17 is a 3-amino-2-oxopropyl phosphate binding site. The Proton acceptor role is filled by histidine 42. 1-deoxy-D-xylulose 5-phosphate contacts are provided by arginine 44 and histidine 49. Glutamate 69 acts as the Proton acceptor in catalysis. 1-deoxy-D-xylulose 5-phosphate is bound at residue threonine 99. The active-site Proton donor is histidine 189. Residues glycine 190 and 211-212 (GH) each bind 3-amino-2-oxopropyl phosphate.

This sequence belongs to the PNP synthase family. In terms of assembly, homooctamer; tetramer of dimers.

Its subcellular location is the cytoplasm. It catalyses the reaction 3-amino-2-oxopropyl phosphate + 1-deoxy-D-xylulose 5-phosphate = pyridoxine 5'-phosphate + phosphate + 2 H2O + H(+). Its pathway is cofactor biosynthesis; pyridoxine 5'-phosphate biosynthesis; pyridoxine 5'-phosphate from D-erythrose 4-phosphate: step 5/5. Catalyzes the complicated ring closure reaction between the two acyclic compounds 1-deoxy-D-xylulose-5-phosphate (DXP) and 3-amino-2-oxopropyl phosphate (1-amino-acetone-3-phosphate or AAP) to form pyridoxine 5'-phosphate (PNP) and inorganic phosphate. This Chlorobium phaeovibrioides (strain DSM 265 / 1930) (Prosthecochloris vibrioformis (strain DSM 265)) protein is Pyridoxine 5'-phosphate synthase.